A 415-amino-acid polypeptide reads, in one-letter code: MAPPVSDDSLQPRDVCVVGVARTPIGDFLGSLSSLTATRLGSIAIQAALKRAHVDPALVEEVFFGNVLTANLGQAPARQAALGAGIPYSVICTTINKVCAAGMKSVMLASQSIQLGLNDIVVAGGMESMSNVPKYLPDARRGSRLGHDTVVDGMMKDGLWDVYNDFGMGVCGEICADQYRITREEQDAYAIQSFERGIAAQNTQLFAWEIVPVEVSTGRGRPSVVIDKDEGLGKFDAAKLKKLRPSFKEDGGSVTAGNASSISDGAAALVLVSGEKALELGLHVIAKIRGYADAAQAPELFTTTPALAIPKAIKRAGLDASQVDYYEINEAFSVVALANQKLLGLDPERLNAHGGAVSLGHPLGCSGARILVTLLGVLRAKKGKYGVASICNGGGGASALVLEFMSEKTIGYSAL.

Cys99 (acyl-thioester intermediate) is an active-site residue. Lys239 is a binding site for CoA. Ala256 contributes to the K(+) binding site. Ser260 is a binding site for CoA. Position 357 (Val357) interacts with K(+). Active-site proton acceptor residues include His361 and Cys391.

This sequence belongs to the thiolase-like superfamily. Thiolase family. As to expression, expressed in the vascular system of roots, cotyledons, young leaves, fully expanded leaves, stems, flowers, and funiculi of siliques.

It localises to the cytoplasm. Its subcellular location is the peroxisome. The catalysed reaction is 2 acetyl-CoA = acetoacetyl-CoA + CoA. It functions in the pathway metabolic intermediate biosynthesis; (R)-mevalonate biosynthesis; (R)-mevalonate from acetyl-CoA: step 1/3. Its function is as follows. Catalyzes the condensation of two molecules of acetyl-CoA to produce acetoacetyl-CoA. This is Acetyl-CoA acetyltransferase 1 from Arabidopsis thaliana (Mouse-ear cress).